Consider the following 101-residue polypeptide: Protein Tat (101 aa).

The tract at residues 1–24 (MEPVDPNREPWNHPGSQPKTACTN) is interaction with human CREBBP. A transactivation region spans residues 1–48 (MEPVDPNREPWNHPGSQPKTACTNCYCKKCCYHCQVCFLQKGLGISYG). Cysteine 22, cysteine 25, and cysteine 27 together coordinate Zn(2+). A cysteine-rich region spans residues 22-37 (CTNCYCKKCCYHCQVC). Lysine 28 carries the N6-acetyllysine; by host PCAF modification. Positions 30, 33, 34, and 37 each coordinate Zn(2+). The segment at 38 to 48 (FLQKGLGISYG) is core. The disordered stretch occupies residues 48 to 101 (GRKKRRQRRSAPPGSKNHQDLIPEQPLFQTQRKPTGPEESKKEVESKAEPDRFD). The Nuclear localization signal, RNA-binding (TAR), and protein transduction signature appears at 49–57 (RKKRRQRRS). The interval 49 to 86 (RKKRRQRRSAPPGSKNHQDLIPEQPLFQTQRKPTGPEE) is interaction with the host capping enzyme RNGTT. N6-acetyllysine; by host EP300 and GCN5L2 is present on residues lysine 50 and lysine 51. 2 positions are modified to asymmetric dimethylarginine; by host PRMT6: arginine 52 and arginine 53. Basic and acidic residues predominate over residues 82–101 (TGPEESKKEVESKAEPDRFD).

This sequence belongs to the lentiviruses Tat family. As to quaternary structure, interacts with host CCNT1. Associates with the P-TEFb complex composed at least of Tat, P-TEFb (CDK9 and CCNT1), TAR RNA, RNA Pol II. Recruits the HATs CREBBP, TAF1/TFIID, EP300, PCAF and GCN5L2. Interacts with host KAT5/Tip60; this interaction targets the latter to degradation. Interacts with the host deacetylase SIRT1. Interacts with host capping enzyme RNGTT; this interaction stimulates RNGTT. Binds to host KDR, and to the host integrins ITGAV/ITGB3 and ITGA5/ITGB1. Interacts with host KPNB1/importin beta-1 without previous binding to KPNA1/importin alpha-1. Interacts with EIF2AK2. Interacts with host nucleosome assembly protein NAP1L1; this interaction may be required for the transport of Tat within the nucleus, since the two proteins interact at the nuclear rim. Interacts with host C1QBP/SF2P32; this interaction involves lysine-acetylated Tat. Interacts with the host chemokine receptors CCR2, CCR3 and CXCR4. Interacts with host DPP4/CD26; this interaction may trigger an anti-proliferative effect. Interacts with host LDLR. Interacts with the host extracellular matrix metalloproteinase MMP1. Interacts with host PRMT6; this interaction mediates Tat's methylation. Interacts with, and is ubiquitinated by MDM2/Hdm2. Interacts with host PSMC3 and HTATIP2. Interacts with STAB1; this interaction may overcome SATB1-mediated repression of IL2 and IL2RA (interleukin) in T cells by binding to the same domain than HDAC1. Interacts (when acetylated) with human CDK13, thereby increasing HIV-1 mRNA splicing and promoting the production of the doubly spliced HIV-1 protein Nef. Interacts with host TBP; this interaction modulates the activity of transcriptional pre-initiation complex. Interacts with host RELA. Interacts with host PLSCR1; this interaction negatively regulates Tat transactivation activity by altering its subcellular distribution. Post-translationally, asymmetrical arginine methylation by host PRMT6 seems to diminish the transactivation capacity of Tat and affects the interaction with host CCNT1. Acetylation by EP300, CREBBP, GCN5L2/GCN5 and PCAF regulates the transactivation activity of Tat. EP300-mediated acetylation of Lys-50 promotes dissociation of Tat from the TAR RNA through the competitive binding to PCAF's bromodomain. In addition, the non-acetylated Tat's N-terminus can also interact with PCAF. PCAF-mediated acetylation of Lys-28 enhances Tat's binding to CCNT1. Lys-50 is deacetylated by SIRT1. In terms of processing, polyubiquitination by host MDM2 does not target Tat to degradation, but activates its transactivation function and fosters interaction with CCNT1 and TAR RNA. Post-translationally, phosphorylated by EIF2AK2 on serine and threonine residues adjacent to the basic region important for TAR RNA binding and function. Phosphorylation of Tat by EIF2AK2 is dependent on the prior activation of EIF2AK2 by dsRNA.

It localises to the host nucleus. The protein localises to the host nucleolus. The protein resides in the host cytoplasm. It is found in the secreted. Its function is as follows. Transcriptional activator that increases RNA Pol II processivity, thereby increasing the level of full-length viral transcripts. Recognizes a hairpin structure at the 5'-LTR of the nascent viral mRNAs referred to as the transactivation responsive RNA element (TAR) and recruits the cyclin T1-CDK9 complex (P-TEFb complex) that will in turn hyperphosphorylate the RNA polymerase II to allow efficient elongation. The CDK9 component of P-TEFb and other Tat-activated kinases hyperphosphorylate the C-terminus of RNA Pol II that becomes stabilized and much more processive. Other factors such as HTATSF1/Tat-SF1, SUPT5H/SPT5, and HTATIP2 are also important for Tat's function. Besides its effect on RNA Pol II processivity, Tat induces chromatin remodeling of proviral genes by recruiting the histone acetyltransferases (HATs) CREBBP, EP300 and PCAF to the chromatin. This also contributes to the increase in proviral transcription rate, especially when the provirus integrates in transcriptionally silent region of the host genome. To ensure maximal activation of the LTR, Tat mediates nuclear translocation of NF-kappa-B by interacting with host RELA. Through its interaction with host TBP, Tat may also modulate transcription initiation. Tat can reactivate a latently infected cell by penetrating in it and transactivating its LTR promoter. In the cytoplasm, Tat is thought to act as a translational activator of HIV-1 mRNAs. Functionally, extracellular circulating Tat can be endocytosed by surrounding uninfected cells via the binding to several surface receptors such as CD26, CXCR4, heparan sulfate proteoglycans (HSPG) or LDLR. Neurons are rarely infected, but they internalize Tat via their LDLR. Through its interaction with nuclear HATs, Tat is potentially able to control the acetylation-dependent cellular gene expression. Modulates the expression of many cellular genes involved in cell survival, proliferation or in coding for cytokines or cytokine receptors. Tat plays a role in T-cell and neurons apoptosis. Tat induced neurotoxicity and apoptosis probably contribute to neuroAIDS. Circulating Tat also acts as a chemokine-like and/or growth factor-like molecule that binds to specific receptors on the surface of the cells, affecting many cellular pathways. In the vascular system, Tat binds to ITGAV/ITGB3 and ITGA5/ITGB1 integrins dimers at the surface of endothelial cells and competes with bFGF for heparin-binding sites, leading to an excess of soluble bFGF. The polypeptide is Protein Tat (Human immunodeficiency virus type 1 group M subtype J (isolate SE9173) (HIV-1)).